A 462-amino-acid polypeptide reads, in one-letter code: tRNA(Ile2) 2-agmatinylcytidine synthetase TiaS (462 aa).

It belongs to the TiaS family.

It is found in the cytoplasm. It carries out the reaction cytidine(34) in tRNA(Ile2) + agmatine + ATP + H2O = 2-agmatinylcytidine(34) in tRNA(Ile2) + AMP + 2 phosphate + 2 H(+). ATP-dependent agmatine transferase that catalyzes the formation of 2-agmatinylcytidine (agm2C) at the wobble position (C34) of tRNA(Ile2), converting the codon specificity from AUG to AUA. This is tRNA(Ile2) 2-agmatinylcytidine synthetase TiaS from Haloquadratum walsbyi (strain DSM 16790 / HBSQ001).